The primary structure comprises 197 residues: Holliday junction branch migration complex subunit RuvA (197 aa).

The interval 1 to 64 is domain I; that stretch reads MIALLRGLVV…EDVLALYGFL (64 aa). Positions 65–143 are domain II; the sequence is TQDEKALFEK…AATGEEPGAP (79 aa). Residues 144–153 form a flexible linker region; the sequence is AAEALSPIDQ. The domain III stretch occupies residues 153–197; that stretch reads QDVLSALLNLGCARPQAEAAVRKAKAAGASLDFEPLFRRALELVR.

It belongs to the RuvA family. In terms of assembly, homotetramer. Forms an RuvA(8)-RuvB(12)-Holliday junction (HJ) complex. HJ DNA is sandwiched between 2 RuvA tetramers; dsDNA enters through RuvA and exits via RuvB. An RuvB hexamer assembles on each DNA strand where it exits the tetramer. Each RuvB hexamer is contacted by two RuvA subunits (via domain III) on 2 adjacent RuvB subunits; this complex drives branch migration. In the full resolvosome a probable DNA-RuvA(4)-RuvB(12)-RuvC(2) complex forms which resolves the HJ.

The protein localises to the cytoplasm. The RuvA-RuvB-RuvC complex processes Holliday junction (HJ) DNA during genetic recombination and DNA repair, while the RuvA-RuvB complex plays an important role in the rescue of blocked DNA replication forks via replication fork reversal (RFR). RuvA specifically binds to HJ cruciform DNA, conferring on it an open structure. The RuvB hexamer acts as an ATP-dependent pump, pulling dsDNA into and through the RuvAB complex. HJ branch migration allows RuvC to scan DNA until it finds its consensus sequence, where it cleaves and resolves the cruciform DNA. The sequence is that of Holliday junction branch migration complex subunit RuvA from Solibacter usitatus (strain Ellin6076).